Here is a 594-residue protein sequence, read N- to C-terminus: Bifunctional lycopene cyclase/phytoene synthase (594 aa).

The lycopene beta-cyclase stretch occupies residues 1 to 249; sequence MGLDYLMVHV…VVFGIAAMHN (249 aa). 7 helical membrane-spanning segments follow: residues 3–23, 35–55, 77–97, 130–150, 153–173, 176–196, and 227–247; these read LDYL…LTIL, KIVL…SYLI, LEEV…YIIF, LGTL…YIGG, MYLG…WVLM, FLLA…TLYL, and IEEA…IAAM. The phytoene synthase stretch occupies residues 256-594; sequence YKAFISTTAM…RFKRAWLAML (339 aa).

It in the N-terminal section; belongs to the lycopene beta-cyclase family. This sequence in the C-terminal section; belongs to the phytoene/squalene synthase family.

Its subcellular location is the membrane. The enzyme catalyses all-trans-lycopene = gamma-carotene. It catalyses the reaction gamma-carotene = all-trans-beta-carotene. The catalysed reaction is 2 (2E,6E,10E)-geranylgeranyl diphosphate = 15-cis-phytoene + 2 diphosphate. Its pathway is carotenoid biosynthesis; beta-carotene biosynthesis. It participates in carotenoid biosynthesis; phytoene biosynthesis; all-trans-phytoene from geranylgeranyl diphosphate: step 1/1. Functionally, bifunctional enzyme that catalyzes the reactions from geranylgeranyl diphosphate to phytoene (phytoene synthase) and lycopene to beta-carotene via the intermediate gamma-carotene (lycopene cyclase). In Arthroderma gypseum (strain ATCC MYA-4604 / CBS 118893) (Microsporum gypseum), this protein is Bifunctional lycopene cyclase/phytoene synthase.